Consider the following 299-residue polypeptide: Protein bem46 (299 aa).

The helical transmembrane segment at 15 to 32 (YSGMASLAVTLIALGFLY) threads the bilayer.

The protein belongs to the serine esterase family.

Its subcellular location is the membrane. Its function is as follows. Suppressor of bem1/bud5. The chain is Protein bem46 (bem46) from Schizosaccharomyces pombe (strain 972 / ATCC 24843) (Fission yeast).